We begin with the raw amino-acid sequence, 970 residues long: uncharacterized protein (970 aa).

The interval 942–970 is disordered; the sequence is QLSFEEDGWTESEPRPVRREAHVRAKERH. A compositionally biased stretch (basic and acidic residues) spans 953–970; sequence SEPRPVRREAHVRAKERH.

This is an uncharacterized protein from Frog virus 3 (isolate Goorha) (FV-3).